The sequence spans 36 residues: Photosystem II reaction center protein Y (36 aa).

Residues 1–4 (MDSR) lie on the Lumenal side of the membrane. The helical transmembrane segment at 5 to 23 (LLVVLIPVLAAASWAVYNI) threads the bilayer. Residues 24–36 (GRVALQQFRKMTS) are Stromal-facing.

Belongs to the PsbY family. PSII is composed of 1 copy each of membrane proteins PsbA, PsbB, PsbC, PsbD, PsbE, PsbF, PsbH, PsbI, PsbJ, PsbK, PsbL, PsbM, PsbT, PsbX, PsbY, PsbZ, Psb30/Ycf12, at least 3 peripheral proteins of the oxygen-evolving complex and a large number of cofactors. It forms dimeric complexes.

The protein resides in the plastid. The protein localises to the chloroplast thylakoid membrane. Loosely associated component of the core of photosystem II (PSII), it is not always seen in crystals. PSII is a light-driven water plastoquinone oxidoreductase, using light energy to abstract electrons from H(2)O, generating a proton gradient subsequently used for ATP formation. The polypeptide is Photosystem II reaction center protein Y (Pyropia yezoensis (Susabi-nori)).